A 260-amino-acid chain; its full sequence is Flap endonuclease Xni (260 aa).

Aspartate 109 is a binding site for Mg(2+). A 5'-3' exonuclease domain is found at 165-259; it reads VKPSQLADYW…DIRFTGPNKA (95 aa). Residues leucine 176, proline 185, valine 187, and isoleucine 190 each contribute to the K(+) site. The segment at 189–194 is interaction with DNA; the sequence is GIGPKA.

It belongs to the Xni family. It depends on Mg(2+) as a cofactor. Requires K(+) as cofactor.

Has flap endonuclease activity. During DNA replication, flap endonucleases cleave the 5'-overhanging flap structure that is generated by displacement synthesis when DNA polymerase encounters the 5'-end of a downstream Okazaki fragment. The protein is Flap endonuclease Xni of Vibrio parahaemolyticus serotype O3:K6 (strain RIMD 2210633).